We begin with the raw amino-acid sequence, 432 residues long: Putative O-antigen transporter (432 aa).

A run of 12 helical transmembrane segments spans residues isoleucine 14–valine 34, alanine 47–glycine 67, alanine 90–serine 110, phenylalanine 134–phenylalanine 154, isoleucine 164–methionine 184, isoleucine 189–serine 209, glycine 234–serine 254, isoleucine 271–alanine 291, isoleucine 305–tyrosine 325, isoleucine 334–tyrosine 354, isoleucine 376–alanine 396, and glycine 400–leucine 420.

The protein localises to the cell inner membrane. It participates in bacterial outer membrane biogenesis; LPS O-antigen biosynthesis. In terms of biological role, may be involved in the translocation process of the nascent O-polysaccharide molecules and/or its ligation to lipid A core units. The sequence is that of Putative O-antigen transporter (rfbX) from Salmonella typhi.